The following is a 487-amino-acid chain: Glycogen synthase 2 (487 aa).

ADP-alpha-D-glucose is bound at residue Lys-12.

The protein belongs to the glycosyltransferase 1 family. Bacterial/plant glycogen synthase subfamily.

It carries out the reaction [(1-&gt;4)-alpha-D-glucosyl](n) + ADP-alpha-D-glucose = [(1-&gt;4)-alpha-D-glucosyl](n+1) + ADP + H(+). Its pathway is glycan biosynthesis; glycogen biosynthesis. Synthesizes alpha-1,4-glucan chains using ADP-glucose. This is Glycogen synthase 2 from Methylococcus capsulatus (strain ATCC 33009 / NCIMB 11132 / Bath).